We begin with the raw amino-acid sequence, 596 residues long: RNA-binding protein involved in heterochromatin assembly dri1 (596 aa).

Ser176 is modified (phosphoserine). The RRM domain occupies 236–314 (KIVHVAGLTN…RMLEIIPSST (79 aa)). The segment at 335–364 (RPGDWNCPMCGFSNFQRRTSCFRCSFPGPT) adopts a RanBP2-type 1 zinc-finger fold. At Ser429 the chain carries Phosphoserine. 2 RanBP2-type zinc fingers span residues 437–468 (RAGD…SRAT) and 552–580 (DQGD…PHYS).

In terms of assembly, interacts with dpb4. Interacts with chp1.

Its subcellular location is the chromosome. The protein resides in the nucleus. The protein localises to the cytoplasm. It is found in the cytoplasmic granule. In terms of biological role, mediates heterochromatin assembly by promoting RNAi-mediated heterochromatin silencing and histone deacetylation. Binds pericetromeric transcripts and recruits the RNA-induced transcriptional silencing (RITS) complex to heterochromatin. Recruits sir2 to chromatin to promote deacetylation of 'Lys-9' of histone H3. Involved in bipolar spindle assembly during mitosis. Required for proper localization of kinesin-14/Klp2 on the spindle microtubules. In Schizosaccharomyces pombe (strain 972 / ATCC 24843) (Fission yeast), this protein is RNA-binding protein involved in heterochromatin assembly dri1.